Consider the following 242-residue polypeptide: Peptidase E (242 aa).

Catalysis depends on charge relay system residues S123, D138, and H160.

The protein belongs to the peptidase S51 family.

Its subcellular location is the cytoplasm. The enzyme catalyses Dipeptidase E catalyzes the hydrolysis of dipeptides Asp-|-Xaa. It does not act on peptides with N-terminal Glu, Asn or Gln, nor does it cleave isoaspartyl peptides.. Functionally, hydrolyzes dipeptides containing N-terminal aspartate residues. May play a role in allowing the cell to use peptide aspartate to spare carbon otherwise required for the synthesis of the aspartate family of amino acids. This is Peptidase E from Nostoc sp. (strain PCC 7120 / SAG 25.82 / UTEX 2576).